Reading from the N-terminus, the 200-residue chain is GTP cyclohydrolase-2 (200 aa).

50–54 (RVHSE) provides a ligand contact to GTP. Zn(2+) contacts are provided by Cys55, Cys66, and Cys68. Residues Gln71, 93–95 (EGR), and Thr115 each bind GTP. The Proton acceptor role is filled by Asp127. Arg129 (nucleophile) is an active-site residue. Positions 150 and 155 each coordinate GTP.

This sequence belongs to the GTP cyclohydrolase II family. It depends on Zn(2+) as a cofactor.

It catalyses the reaction GTP + 4 H2O = 2,5-diamino-6-hydroxy-4-(5-phosphoribosylamino)-pyrimidine + formate + 2 phosphate + 3 H(+). The protein operates within cofactor biosynthesis; riboflavin biosynthesis; 5-amino-6-(D-ribitylamino)uracil from GTP: step 1/4. Its function is as follows. Catalyzes the conversion of GTP to 2,5-diamino-6-ribosylamino-4(3H)-pyrimidinone 5'-phosphate (DARP), formate and pyrophosphate. This Acinetobacter baumannii (strain SDF) protein is GTP cyclohydrolase-2.